The sequence spans 349 residues: tRNA pseudouridine synthase D (349 aa).

Residue phenylalanine 27 coordinates substrate. Aspartate 80 acts as the Nucleophile in catalysis. Substrate is bound at residue asparagine 129. A TRUD domain is found at glycine 155 to leucine 303. A substrate-binding site is contributed by phenylalanine 329.

The protein belongs to the pseudouridine synthase TruD family.

The enzyme catalyses uridine(13) in tRNA = pseudouridine(13) in tRNA. Responsible for synthesis of pseudouridine from uracil-13 in transfer RNAs. The protein is tRNA pseudouridine synthase D of Shigella sonnei (strain Ss046).